A 243-amino-acid chain; its full sequence is Protein Thf1 (243 aa).

The stretch at 180–224 forms a coiled coil; that stretch reads SKARVEKDLNLYKSNLEKMAQAVELTEQILESERRKREQNESAKL. Basic and acidic residues predominate over residues 210 to 220; the sequence is ESERRKREQNE. Residues 210 to 243 form a disordered region; that stretch reads ESERRKREQNESAKLNTGSSEQMSQGVEACSNIS. Residues 221 to 243 are compositionally biased toward polar residues; the sequence is SAKLNTGSSEQMSQGVEACSNIS.

The protein belongs to the THF1 family.

In terms of biological role, may be involved in photosynthetic membrane biogenesis. This is Protein Thf1 from Prochlorococcus marinus (strain MIT 9313).